The chain runs to 209 residues: Urease accessory protein UreG (209 aa).

Residue 10–17 (GPVGSGKT) coordinates GTP.

It belongs to the SIMIBI class G3E GTPase family. UreG subfamily. In terms of assembly, homodimer. UreD, UreF and UreG form a complex that acts as a GTP-hydrolysis-dependent molecular chaperone, activating the urease apoprotein by helping to assemble the nickel containing metallocenter of UreC. The UreE protein probably delivers the nickel.

The protein resides in the cytoplasm. In terms of biological role, facilitates the functional incorporation of the urease nickel metallocenter. This process requires GTP hydrolysis, probably effectuated by UreG. This is Urease accessory protein UreG from Lysinibacillus sphaericus (strain C3-41).